A 113-amino-acid chain; its full sequence is AQVMLMAVALVLMLAAVPRAAVAIDCGHVDSLVRPCLSYVQGGPGPSGQCCDGVKNLHNQARSQSDRQSACNCLKGIARGIHNLNEDNARSIPPKCGVNLPYTISLNIDCSRV.

A signal peptide spans 1–24; sequence AQVMLMAVALVLMLAAVPRAAVAI. Cystine bridges form between Cys-26/Cys-73, Cys-36/Cys-50, Cys-51/Cys-96, and Cys-71/Cys-110. Asp-30 carries Cis-14-hydroxy-10,13-dioxo-7-heptadecenoic acid aspartate ester lipidation.

The protein belongs to the plant LTP family.

In terms of biological role, plant non-specific lipid-transfer proteins transfer phospholipids as well as galactolipids across membranes. May play a role in wax or cutin deposition in the cell walls of expanding epidermal cells and certain secretory tissues. The chain is Non-specific lipid-transfer protein from Triticum aestivum (Wheat).